Consider the following 651-residue polypeptide: Protein transport protein SEC9 (651 aa).

Disordered regions lie at residues 1–22 (MGLKKFFKIKPPEEATPEQNKD), 53–299 (AEDK…QAPM), and 313–332 (RNSEVDLNEEPRTGEFDFEE). Phosphoserine is present on residues Ser-79 and Ser-92. Over residues 86-112 (NEATAGSNRGSSGTQDLGNGAESNSMQ) the composition is skewed to polar residues. Positions 120–129 (DDYRYDDDPY) are enriched in basic and acidic residues. Polar residues-rich tracts occupy residues 157–218 (GTSL…SLDQ) and 244–284 (DSNT…ANPY). Ser-186, Ser-190, Ser-213, Ser-271, and Ser-273 each carry phosphoserine. Positions 285–296 (SSRSVRQPQSQQ) are enriched in low complexity. Positions 313–327 (RNSEVDLNEEPRTGE) are enriched in basic and acidic residues. Phosphoserine is present on Ser-315. Thr-355 is subject to Phosphothreonine. Phosphoserine is present on Ser-359. T-SNARE coiled-coil homology domains lie at 434–496 (KFTK…VAEL) and 588–650 (DEME…LAGI).

Belongs to the SNAP-25 family. As to quaternary structure, interacts with SRO7 and SRO77.

Functionally, component of a SNARE complex that may be the effector of SEC4 function in exocytosis. In Saccharomyces cerevisiae (strain ATCC 204508 / S288c) (Baker's yeast), this protein is Protein transport protein SEC9 (SEC9).